Here is a 1839-residue protein sequence, read N- to C-terminus: Adenylate cyclase (1839 aa).

Disordered regions lie at residues methionine 1–glutamate 21, isoleucine 43–serine 87, threonine 126–serine 245, lysine 272–alanine 315, lysine 332–aspartate 388, and glutamate 400–lysine 468. Residues serine 165–serine 211 show a composition bias toward polar residues. Over residues glutamine 212–glutamine 221 the composition is skewed to low complexity. The segment covering arginine 222–glutamine 233 has biased composition (basic and acidic residues). Residues lysine 332–tyrosine 355 show a composition bias toward basic residues. Residues proline 361–glutamate 376 are compositionally biased toward basic and acidic residues. Over residues serine 407–glycine 428 the composition is skewed to low complexity. A Ras-associating domain is found at arginine 494–leucine 574. LRR repeat units lie at residues threonine 632 to serine 655, leucine 659 to alanine 679, lysine 681 to leucine 702, asparagine 704 to lysine 726, asparagine 727 to cysteine 748, asparagine 750 to leucine 771, lysine 773 to lysine 794, asparagine 795 to leucine 816, glutamine 817 to threonine 834, arginine 835 to methionine 856, asparagine 858 to lysine 879, arginine 882 to leucine 903, arginine 905 to leucine 926, serine 928 to glutamate 950, leucine 951 to phenylalanine 971, serine 982 to phenylalanine 1004, asparagine 1006 to asparagine 1027, leucine 1028 to histidine 1048, serine 1051 to serine 1073, arginine 1074 to tryptophan 1096, aspartate 1103 to glutamate 1124, and leucine 1135 to isoleucine 1160. Residues arginine 1173 to leucine 1439 enclose the PPM-type phosphatase domain. In terms of domain architecture, Guanylate cyclase spans alanine 1483–serine 1620. The Mg(2+) site is built by aspartate 1488 and aspartate 1531.

It belongs to the adenylyl cyclase class-3 family. Mg(2+) is required as a cofactor.

It carries out the reaction ATP = 3',5'-cyclic AMP + diphosphate. In terms of biological role, plays essential roles in regulation of cellular metabolism by catalyzing the synthesis of a second messenger, cAMP. The protein is Adenylate cyclase (CYR1) of Lachancea kluyveri (Yeast).